The chain runs to 340 residues: Thioesterase pkgB (340 aa).

Zn(2+) is bound by residues histidine 97, histidine 99, aspartate 101, histidine 102, and histidine 205. Aspartate 101 acts as the Proton donor/acceptor in catalysis. Over residues serine 242–serine 258 the composition is skewed to low complexity. The disordered stretch occupies residues serine 242–serine 271.

This sequence belongs to the metallo-beta-lactamase superfamily. Requires Zn(2+) as cofactor.

The enzyme catalyses 3,5,7,9,11,13-hexaoxotetradecanoyl-[ACP] = dehydrocitreoisocoumarin + holo-[ACP] + H2O. The catalysed reaction is 3,5,7,9,11-pentaoxododecanoyl-[ACP] = 6,8-dihydroxy-3-(2-oxopropyl)-isocoumarin + holo-[ACP] + H2O. In terms of biological role, thioesterase; part of the pkg gene cluster that mediates the biosynthesis of dihydrocitreoisocoumarin and 6,8-dihydroxy-3-(2-oxopropyl)-isocoumarin. The non-reducing polyketide synthase pkgA performs the condensation of one acetyl-CoA starter unit with 6 and 5 malonyl-CoA units, respectively. As pkgA lacks a releasing domain, the thioesterase pkgB is necessary to break the thioester bond and release dihydrocitreoisocoumarin and 6,8-dihydroxy-3-(2-oxopropyl)-isocoumarin from pkgA. This chain is Thioesterase pkgB, found in Emericella nidulans (strain FGSC A4 / ATCC 38163 / CBS 112.46 / NRRL 194 / M139) (Aspergillus nidulans).